The following is a 73-amino-acid chain: Translation initiation factor IF-1 (73 aa).

An S1-like domain is found at 1–73 (MAKKDGAIEI…TRGRIVYRYK (73 aa)).

Belongs to the IF-1 family. In terms of assembly, component of the 30S ribosomal translation pre-initiation complex which assembles on the 30S ribosome in the order IF-2 and IF-3, IF-1 and N-formylmethionyl-tRNA(fMet); mRNA recruitment can occur at any time during PIC assembly.

Its subcellular location is the cytoplasm. Its function is as follows. One of the essential components for the initiation of protein synthesis. Stabilizes the binding of IF-2 and IF-3 on the 30S subunit to which N-formylmethionyl-tRNA(fMet) subsequently binds. Helps modulate mRNA selection, yielding the 30S pre-initiation complex (PIC). Upon addition of the 50S ribosomal subunit IF-1, IF-2 and IF-3 are released leaving the mature 70S translation initiation complex. The sequence is that of Translation initiation factor IF-1 from Thermobifida fusca (strain YX).